The sequence spans 163 residues: MSSVYDFNVKNANGDDVSLSDYKGKVLIIVNVASQCGLTNKNYTQLKELLDVYKKDGLEVLAFPCNQFAGQEPSCEIDIQAFVADKFKFEPTLFQKIDVNGDKQSPLFKFLKNEKGGFMFDAIKWNFTKFLVGRDGKIIKRFGPTTDPKDMEKDIKEALGEKL.

Cys36 is an active-site residue.

It belongs to the glutathione peroxidase family.

It is found in the cytoplasm. It catalyses the reaction 2 glutathione + H2O2 = glutathione disulfide + 2 H2O. May constitute a glutathione peroxidase-like protective system against oxidative stresses. The sequence is that of Glutathione peroxidase 1 (gpx-1) from Caenorhabditis elegans.